A 468-amino-acid polypeptide reads, in one-letter code: Asparagine--tRNA ligase (468 aa).

It belongs to the class-II aminoacyl-tRNA synthetase family. Homodimer.

The protein resides in the cytoplasm. It catalyses the reaction tRNA(Asn) + L-asparagine + ATP = L-asparaginyl-tRNA(Asn) + AMP + diphosphate + H(+). The polypeptide is Asparagine--tRNA ligase (Parabacteroides distasonis (strain ATCC 8503 / DSM 20701 / CIP 104284 / JCM 5825 / NCTC 11152)).